The chain runs to 379 residues: Alcohol dehydrogenase class-3 (379 aa).

Ala-2 is subject to N-acetylalanine. Cys-47 is a binding site for Zn(2+). His-48 contributes to the NAD(+) binding site. Residues Thr-49 and His-69 each coordinate an alcohol. The Zn(2+) site is built by His-69, Glu-70, Cys-99, Cys-102, Cys-105, Cys-113, and Cys-177. Residues 202–207 (GLGTVG), Asp-226, Lys-231, Ile-272, 295–297 (VGV), 320–322 (TAF), and Arg-372 contribute to the NAD(+) site.

Belongs to the zinc-containing alcohol dehydrogenase family. Class-III subfamily. Homodimer. Zn(2+) serves as cofactor. As to expression, ubiquitous.

It localises to the cytoplasm. The enzyme catalyses a primary alcohol + NAD(+) = an aldehyde + NADH + H(+). It catalyses the reaction a secondary alcohol + NAD(+) = a ketone + NADH + H(+). The catalysed reaction is S-(hydroxymethyl)glutathione + NADP(+) = S-formylglutathione + NADPH + H(+). It carries out the reaction S-(hydroxymethyl)glutathione + NAD(+) = S-formylglutathione + NADH + H(+). The enzyme catalyses S-nitrosoglutathione + NADH + H(+) = S-(hydroxysulfenamide)glutathione + NAD(+). Its activity is regulated as follows. Repressed by thiol-modifying agents N-ethylmaleimide (NEM) and 5,5-dithio-bis-(2-nitrobenzoic acid) (DTNB), as well as by methyl methanethiosulfonate (MMTS) in a dose-dependent manner. Inhibited by hydrogen peroxide H(2)O(2). In terms of biological role, alcohol dehydrogenase catalyzing the reduction of nitrosoglutathione. Can also use long-chain alcohols including cinnamyl alcohol and geraniol, and, to a lower extent, octanol. Plays a central role in formaldehyde detoxification. Not able to use ethanol (EtOH) as substrate. The polypeptide is Alcohol dehydrogenase class-3 (Arabidopsis thaliana (Mouse-ear cress)).